Consider the following 386-residue polypeptide: MTGLDMETIFAKIKDEYARTDDVGKRQIQGHIRELQVGFYSDWDVVMRLSSGPLQVALAKVAIDLGIFRSLKESDTPITLAEFVKKTGASPRLLGRILRTQAAFGLIKETGPQEYTSSAFTDVFANSDAAGAVVQLFDISGPCTQILPDFLAERNYQDITSNKDCVFQKAFGSDLTMFEWMPQHPKHMESLGHLMALERPVSWVDHFPILEELGKFPAPDKVLMVDIGGGFGQQSKALRAKFPNLPGRLIVQDIPQTLANAQPAAGIEFMEHNFFEPQPIQNAKFYYLRHVFHDWPDEQCVLILKQIIPAMGPESQILIDEMVIPSTGVPWQAAFTDLLMMNSLGGVERTRAEWDDLMEQAGLEIIQSKVYDSKEQAILVAVAKRT.

Position 137 to 150 (137 to 150) interacts with substrate; it reads FDISGPCTQILPDF. Positions 177-197 are substrate binding; it reads MFEWMPQHPKHMESLGHLMAL. S-adenosyl-L-methionine-binding positions include 228–229, aspartate 253, 273–274, and arginine 289; these read GG and NF. Histidine 293 serves as the catalytic Proton acceptor.

This sequence belongs to the class I-like SAM-binding methyltransferase superfamily. Cation-independent O-methyltransferase family. COMT subfamily.

It carries out the reaction 6-demethylsterigmatocystin + S-adenosyl-L-methionine = sterigmatocystin + S-adenosyl-L-homocysteine + H(+). Its pathway is mycotoxin biosynthesis; aflatoxin biosynthesis. Functionally, catalyzes both the conversion of demethylsterigmatocystin (DMST) to sterigmatocystin and the conversion of dihydrodemethylsterigmatocystin to dihydrosterigmatocystin (DHDMST) during aflatoxin biosynthesis. This Aspergillus flavus (strain ATCC 200026 / FGSC A1120 / IAM 13836 / NRRL 3357 / JCM 12722 / SRRC 167) protein is Demethylsterigmatocystin 6-O-methyltransferase (omtB).